Reading from the N-terminus, the 250-residue chain is Pyrroloquinoline-quinone synthase (250 aa).

The protein belongs to the PqqC family.

The catalysed reaction is 6-(2-amino-2-carboxyethyl)-7,8-dioxo-1,2,3,4,7,8-hexahydroquinoline-2,4-dicarboxylate + 3 O2 = pyrroloquinoline quinone + 2 H2O2 + 2 H2O + H(+). The protein operates within cofactor biosynthesis; pyrroloquinoline quinone biosynthesis. Functionally, ring cyclization and eight-electron oxidation of 3a-(2-amino-2-carboxyethyl)-4,5-dioxo-4,5,6,7,8,9-hexahydroquinoline-7,9-dicarboxylic-acid to PQQ. This chain is Pyrroloquinoline-quinone synthase, found in Xanthomonas campestris pv. campestris (strain 8004).